Consider the following 491-residue polypeptide: 2,3-bisphosphoglycerate-independent phosphoglycerate mutase (491 aa).

Residues Asp11 and Ser61 each contribute to the Mn(2+) site. Ser61 functions as the Phosphoserine intermediate in the catalytic mechanism. Substrate-binding positions include His118, 147 to 148 (RD), Arg177, Arg183, 247 to 250 (RNDR), and Lys320. Positions 386, 390, 427, 428, and 445 each coordinate Mn(2+).

Belongs to the BPG-independent phosphoglycerate mutase family. As to quaternary structure, monomer. The cofactor is Mn(2+).

The catalysed reaction is (2R)-2-phosphoglycerate = (2R)-3-phosphoglycerate. It functions in the pathway carbohydrate degradation; glycolysis; pyruvate from D-glyceraldehyde 3-phosphate: step 3/5. Catalyzes the interconversion of 2-phosphoglycerate and 3-phosphoglycerate. In Helicobacter pylori (strain ATCC 700392 / 26695) (Campylobacter pylori), this protein is 2,3-bisphosphoglycerate-independent phosphoglycerate mutase.